The chain runs to 674 residues: NADH-ubiquinone oxidoreductase chain 5 (674 aa).

17 helical membrane passes run Gly27–Phe47, Leu81–Val101, Phe113–Tyr133, Ile135–Phe155, Val173–Asp193, Ile200–Ala220, Thr242–Leu262, Leu275–Leu295, Arg301–Tyr323, Val325–Gly345, Leu363–Ala383, Val410–Ile430, Thr453–Ala473, Ala514–Phe534, Tyr556–Ile576, Ala616–Leu636, and Ala639–Ile659.

It belongs to the complex I subunit 5 family.

The protein resides in the mitochondrion inner membrane. It carries out the reaction a ubiquinone + NADH + 5 H(+)(in) = a ubiquinol + NAD(+) + 4 H(+)(out). Core subunit of the mitochondrial membrane respiratory chain NADH dehydrogenase (Complex I) that is believed to belong to the minimal assembly required for catalysis. Complex I functions in the transfer of electrons from NADH to the respiratory chain. The immediate electron acceptor for the enzyme is believed to be ubiquinone. The protein is NADH-ubiquinone oxidoreductase chain 5 (ND5) of Mycosarcoma maydis (Corn smut fungus).